The following is a 400-amino-acid chain: Lysophospholipid transporter LplT (400 aa).

Helical transmembrane passes span 19–39 (VIVAQFLSAFGDNALLFATLA), 53–73 (VLQMVFVGAYILFAPFVGQIA), 91–111 (AGAAGICLGVNPFVGYTLVGI), 139–159 (LMEASTIAAILLGSVAGGVLA), 164–184 (IAALVACALAYAGAVAANLFI), 195–213 (SWRLSAMTRSFFSACVVLW), 227–247 (LFWGAGVTLRFLLVLWVPVAL), 257–277 (YLNAMVAVGIVVGAGAAAKLV), 281–301 (TVSRCMPAGILIGVVVAIFSL), 304–324 (ALLPAYALLLLIGMLGGFFVV), 352–372 (NSAMLLMLGLYSLAVLVGVPA), and 373–393 (VAIGIGFGVLFALAIAALWIW).

It belongs to the major facilitator superfamily. LplT (TC 2.A.1.42) family.

It localises to the cell inner membrane. Its function is as follows. Catalyzes the facilitated diffusion of 2-acyl-glycero-3-phosphoethanolamine (2-acyl-GPE) into the cell. This chain is Lysophospholipid transporter LplT, found in Salmonella heidelberg (strain SL476).